A 133-amino-acid chain; its full sequence is Small ribosomal subunit protein uS8 (133 aa).

The protein belongs to the universal ribosomal protein uS8 family. Part of the 30S ribosomal subunit. Contacts proteins S5 and S12.

One of the primary rRNA binding proteins, it binds directly to 16S rRNA central domain where it helps coordinate assembly of the platform of the 30S subunit. The chain is Small ribosomal subunit protein uS8 from Synechococcus elongatus (strain ATCC 33912 / PCC 7942 / FACHB-805) (Anacystis nidulans R2).